Here is a 91-residue protein sequence, read N- to C-terminus: Small ribosomal subunit protein uS19 (91 aa).

Belongs to the universal ribosomal protein uS19 family.

Functionally, protein S19 forms a complex with S13 that binds strongly to the 16S ribosomal RNA. The protein is Small ribosomal subunit protein uS19 of Bordetella pertussis (strain Tohama I / ATCC BAA-589 / NCTC 13251).